The primary structure comprises 212 residues: Probable GTP-binding protein EngB (212 aa).

Residues 25 to 199 (FGYEVAFAGR…WAKLDEWMEY (175 aa)) form the EngB-type G domain. Residues 33-40 (GRSNAGKS), 60-64 (GRTQL), 78-81 (DLPG), 145-148 (TKSD), and 178-180 (FSS) each bind GTP. Mg(2+) is bound by residues S40 and T62.

This sequence belongs to the TRAFAC class TrmE-Era-EngA-EngB-Septin-like GTPase superfamily. EngB GTPase family. Requires Mg(2+) as cofactor.

Its function is as follows. Necessary for normal cell division and for the maintenance of normal septation. The chain is Probable GTP-binding protein EngB from Hydrogenovibrio crunogenus (strain DSM 25203 / XCL-2) (Thiomicrospira crunogena).